A 351-amino-acid chain; its full sequence is Silk gland factor 3 (351 aa).

Disordered regions lie at residues 61–88 and 131–154; these read ADPW…HDHR and SSPR…TPTS. Over residues 135-145 the composition is skewed to basic and acidic residues; sequence DPLHHHAMERD. The POU-specific domain maps to 149–223; the sequence is EDTPTSDDLE…LLQKWLEEAD (75 aa). Positions 241-300 form a DNA-binding region, homeobox; that stretch reads KRKKRTSIEVSVKGALEQHFHKQPKPSAQEITSLADSLQLEKEVVRVWFCNRRQKEKRMT. The interval 314–351 is disordered; the sequence is GHAHYGHGDVHGSPLQHSPPGLSPQHGLPQGAHTLAAH.

It belongs to the POU transcription factor family. Class-3 subfamily. As to expression, restricted to the middle silk gland.

The protein localises to the nucleus. Involved in the transcriptional regulation of sericin-1 gene. In Bombyx mori (Silk moth), this protein is Silk gland factor 3 (SGF3).